Here is a 190-residue protein sequence, read N- to C-terminus: Elongation factor P-like protein (190 aa).

Belongs to the elongation factor P family.

The protein is Elongation factor P-like protein of Edwardsiella ictaluri (strain 93-146).